The primary structure comprises 425 residues: UDP-N-acetylglucosamine 1-carboxyvinyltransferase (425 aa).

Position 23-24 (23-24 (KN)) interacts with phosphoenolpyruvate. Position 100 (R100) interacts with UDP-N-acetyl-alpha-D-glucosamine. C124 serves as the catalytic Proton donor. A 2-(S-cysteinyl)pyruvic acid O-phosphothioketal modification is found at C124. D313 and I335 together coordinate UDP-N-acetyl-alpha-D-glucosamine.

It belongs to the EPSP synthase family. MurA subfamily.

It is found in the cytoplasm. It catalyses the reaction phosphoenolpyruvate + UDP-N-acetyl-alpha-D-glucosamine = UDP-N-acetyl-3-O-(1-carboxyvinyl)-alpha-D-glucosamine + phosphate. Its pathway is cell wall biogenesis; peptidoglycan biosynthesis. In terms of biological role, cell wall formation. Adds enolpyruvyl to UDP-N-acetylglucosamine. In Wolbachia pipientis wMel, this protein is UDP-N-acetylglucosamine 1-carboxyvinyltransferase.